We begin with the raw amino-acid sequence, 269 residues long: MNQMNPAFVMPDVQSTVDTRQIPIQRVGVKAVRHPLTVCTESGDVQPSVGVWNLDVRLPADQKGTHMSRFVALLEENRAPLTVERFRAMLASMLEKLEAQAGRIEVTFPYFVNKTAPVSGVQSLLDYEVTLAGESRDGHTRVFLKVLVPVTSLCPCSKKISQYGAHNQRSHVTIDAELAGDLPVEALIRIAEEEASCELWGLLKRPDEKFVTERAYENPKFVEDLVRDVAQRLDADERVIAYVLEAENFESIHNHSAYALIERDKRLAA.

The protein belongs to the GTP cyclohydrolase IV family.

It catalyses the reaction GTP + H2O = 7,8-dihydroneopterin 3'-triphosphate + formate + H(+). It participates in cofactor biosynthesis; 7,8-dihydroneopterin triphosphate biosynthesis; 7,8-dihydroneopterin triphosphate from GTP: step 1/1. Its function is as follows. Converts GTP to 7,8-dihydroneopterin triphosphate. In Burkholderia vietnamiensis (strain G4 / LMG 22486) (Burkholderia cepacia (strain R1808)), this protein is GTP cyclohydrolase FolE2.